A 403-amino-acid polypeptide reads, in one-letter code: Histidine--tRNA ligase (403 aa).

This sequence belongs to the class-II aminoacyl-tRNA synthetase family. As to quaternary structure, homodimer.

The protein localises to the cytoplasm. It carries out the reaction tRNA(His) + L-histidine + ATP = L-histidyl-tRNA(His) + AMP + diphosphate + H(+). This is Histidine--tRNA ligase from Sulfurimonas denitrificans (strain ATCC 33889 / DSM 1251) (Thiomicrospira denitrificans (strain ATCC 33889 / DSM 1251)).